The following is a 250-amino-acid chain: tRNA (guanine-N(1)-)-methyltransferase (250 aa).

Residues G116 and 136–141 (IGDYVL) contribute to the S-adenosyl-L-methionine site.

Belongs to the RNA methyltransferase TrmD family. Homodimer.

Its subcellular location is the cytoplasm. The catalysed reaction is guanosine(37) in tRNA + S-adenosyl-L-methionine = N(1)-methylguanosine(37) in tRNA + S-adenosyl-L-homocysteine + H(+). Functionally, specifically methylates guanosine-37 in various tRNAs. The protein is tRNA (guanine-N(1)-)-methyltransferase of Pseudomonas putida (strain W619).